Here is a 145-residue protein sequence, read N- to C-terminus: LIM domain only protein 3 (145 aa).

2 LIM zinc-binding domains span residues 11–73 (KGCA…LFGV) and 75–137 (GNCA…GLMK).

The polypeptide is LIM domain only protein 3 (Danio rerio (Zebrafish)).